Consider the following 97-residue polypeptide: Small ribosomal subunit protein bS20 (97 aa).

Belongs to the bacterial ribosomal protein bS20 family.

Its function is as follows. Binds directly to 16S ribosomal RNA. The polypeptide is Small ribosomal subunit protein bS20 (Prochlorococcus marinus (strain MIT 9515)).